The primary structure comprises 149 residues: Flagellar assembly factor FliW (149 aa).

It belongs to the FliW family. In terms of assembly, interacts with translational regulator CsrA and flagellin(s).

It is found in the cytoplasm. Acts as an anti-CsrA protein, binds CsrA and prevents it from repressing translation of its target genes, one of which is flagellin. Binds to flagellin and participates in the assembly of the flagellum. The protein is Flagellar assembly factor FliW of Thermotoga petrophila (strain ATCC BAA-488 / DSM 13995 / JCM 10881 / RKU-1).